A 142-amino-acid chain; its full sequence is Large ribosomal subunit protein uL11 (142 aa).

It belongs to the universal ribosomal protein uL11 family. Part of the ribosomal stalk of the 50S ribosomal subunit. Interacts with L10 and the large rRNA to form the base of the stalk. L10 forms an elongated spine to which L12 dimers bind in a sequential fashion forming a multimeric L10(L12)X complex. One or more lysine residues are methylated.

Functionally, forms part of the ribosomal stalk which helps the ribosome interact with GTP-bound translation factors. The sequence is that of Large ribosomal subunit protein uL11 from Pseudoalteromonas translucida (strain TAC 125).